Reading from the N-terminus, the 427-residue chain is MPCFDSVYTKEYAQQLDAVDPLARFRNEFYIDEDSIYLDGNSLGLLSTRAEQSLLDVLDSWKQYGIDGWTKGKHPWFYLSESLGEKMASLVGAKAEEVIVTGSTTTNLHQLVSSFFRPEGKKTKILADELNFPSDIYALKSQLHLQGFDPEEHLIQVKSDNGHLLNEEDIIAEMKEDIALIVLPSVLYRSGQILDMERLTTAAHQRNILIGFDLCHSIGAIPHQLRKWDVDFAFWCTYKHVNGGPGSVAALFVNEKHFGRRPGLAGWFSSNKQKQFDMEHTLTPAEHAGAFQIGTPHIFSIAPLIGSLAIFAEAGIEQIRKKSLKLTDYMMTLIEHELSDYQFTIQNPRDERRGAHLYIEHDEAARICKALKEENVIPDFRSPKGIRLAPVALYNTFKEVWNTIQVLKFIMKEERYKKFKNERDVVA.

Residues threonine 104, threonine 105, 132–135 (FPSD), aspartate 213, histidine 216, and tyrosine 238 each bind pyridoxal 5'-phosphate. Lysine 239 carries the N6-(pyridoxal phosphate)lysine modification. Pyridoxal 5'-phosphate-binding residues include tryptophan 267 and threonine 295.

It belongs to the kynureninase family. In terms of assembly, homodimer. It depends on pyridoxal 5'-phosphate as a cofactor.

The enzyme catalyses L-kynurenine + H2O = anthranilate + L-alanine + H(+). It carries out the reaction 3-hydroxy-L-kynurenine + H2O = 3-hydroxyanthranilate + L-alanine + H(+). The protein operates within amino-acid degradation; L-kynurenine degradation; L-alanine and anthranilate from L-kynurenine: step 1/1. Its pathway is cofactor biosynthesis; NAD(+) biosynthesis; quinolinate from L-kynurenine: step 2/3. Catalyzes the cleavage of L-kynurenine (L-Kyn) and L-3-hydroxykynurenine (L-3OHKyn) into anthranilic acid (AA) and 3-hydroxyanthranilic acid (3-OHAA), respectively. This chain is Kynureninase, found in Shouchella clausii (strain KSM-K16) (Alkalihalobacillus clausii).